The chain runs to 316 residues: Large ribosomal subunit protein uL4 (316 aa).

The interval 1–211 (MASCVVKNWQ…EQLKARWGSD (211 aa)) is large ribosomal subunit protein uL4. 2 disordered regions span residues 44-76 (ARQG…ARAG) and 231-316 (EDQA…ESDD). The span at 60-71 (GGRKPWKQKGTG) shows a compositional bias: basic residues. Residues 212–316 (AAPAVLETPS…TAPAEEESDD (105 aa)) are unknown. Over residues 255 to 270 (QTPAQPEAQENQAALQ) the composition is skewed to low complexity. 2 stretches are compositionally biased toward acidic residues: residues 281–291 (EQTEEPQDPAE) and 301–316 (TVEE…ESDD).

Belongs to the universal ribosomal protein uL4 family. As to quaternary structure, part of the 50S ribosomal subunit.

Functionally, one of the primary rRNA binding proteins, this protein initially binds near the 5'-end of the 23S rRNA. It is important during the early stages of 50S assembly. It makes multiple contacts with different domains of the 23S rRNA in the assembled 50S subunit and ribosome. In terms of biological role, forms part of the polypeptide exit tunnel. In Synechococcus sp. (strain JA-2-3B'a(2-13)) (Cyanobacteria bacterium Yellowstone B-Prime), this protein is Large ribosomal subunit protein uL4.